The following is a 592-amino-acid chain: A-type ATP synthase subunit A (592 aa).

234-241 (GPFGSGKT) lines the ATP pocket.

This sequence belongs to the ATPase alpha/beta chains family. Has multiple subunits with at least A(3), B(3), C, D, E, F, H, I and proteolipid K(x).

Its subcellular location is the cell membrane. The enzyme catalyses ATP + H2O + 4 H(+)(in) = ADP + phosphate + 5 H(+)(out). Its function is as follows. Produces ATP from ADP in the presence of a proton gradient across the membrane. The archaeal alpha chain is a catalytic subunit. Functionally, component of the A-type ATP synthase that produces ATP from ADP in the presence of a proton gradient across the membrane. The A chain is the catalytic subunit. The chain is A-type ATP synthase subunit A from Sulfolobus acidocaldarius (strain ATCC 33909 / DSM 639 / JCM 8929 / NBRC 15157 / NCIMB 11770).